Reading from the N-terminus, the 68-residue chain is MDPETCPCPSGGSCTCADSCKCEGCKCTSCKKSCCSCCPAECEKCAKDCVCKGGEGAEAEAEKCSCCE.

M1 bears the N-acetylmethionine mark. Residues 1–30 (MDPETCPCPSGGSCTCADSCKCEGCKCTSC) are beta. 9 residues coordinate a divalent metal cation: C6, C8, C14, C16, C20, C22, C25, C27, and C30. The tract at residues 31-68 (KKSCCSCCPAECEKCAKDCVCKGGEGAEAEAEKCSCCE) is alpha. A Phosphoserine modification is found at S33. Positions 34, 35, 37, 38, 42, 45, 49, 51, 64, 66, and 67 each coordinate a divalent metal cation.

Belongs to the metallothionein superfamily. Type 1 family.

Functionally, binds heavy metals. Contains five zinc and one copper atoms per polypeptide chain and only a negligible amount of cadmium. In Macaca fascicularis (Crab-eating macaque), this protein is Metallothionein-3 (MT3).